The following is a 686-amino-acid chain: Endonuclease GajA (686 aa).

Residues 1 to 423 (MYLKSLKIYN…NYVTTKNNYT (423 aa)) form an ATPase domain region. Residue 52-56 (NCGKT) coordinates ATP. The interval 463–599 (FFSDAIIFVE…TSFEEAFILT (137 aa)) is toprim domain. Glutamate 472, glutamate 476, aspartate 559, and glutamate 604 together coordinate a divalent metal cation.

As to quaternary structure, homotetramer. Forms the core of the anti-phage defense complex. Interacts with GajB; 2 GajB dimers dock at opposite sides of the GajA complex to form a 4:4 GajA-GajB assembly (GajAB). GajAB interacts with Bacillus phage Phi3T Gad1 protein; this interaction forms a 4:4:8 GajAB-Gad1 complex and leads to GajAB inhibition. Requires Mg(2+) as cofactor.

In terms of biological role, component of antiviral defense system Gabija type II, composed of GajA and GajB. Probably a nicking endonuclease that is strongly inhibited by physiological levels of nucleotides (NTP and dNTP). Expression of Gabija type II in B.subtilis (strain BEST7003) confers resistance to phages phi105, and SpBeta. During viral replication, when nucleotides are rapidly consumed, it is de-suppressed and degrades target DNA. The chain is Endonuclease GajA from Bacillus cereus (strain HuB5-5).